Here is a 1042-residue protein sequence, read N- to C-terminus: MLNQNLTISQEIAAQPKTQYFTKEDGDALANLLESNPYKEQAVEVKSLLKSERLIESSRVEPEVDWFYCKLGLDSNYFDSTPSIVIARHILSLYAAKMVSHATGAKLEVHLHSKNEGSATFITPSNPGKRDSPAMMIEHAIESHYFGEGYHQDQQLLSPQQVAVAPFPVSPKPPTGTNLPPHGFRLACYRTTGTVSNSSPVHLRLYYLTKPVFPQATNDLSASKNDEILATETDLFKIGDISFIEKSSELTKKIYQEVMNEVVGKQGPVIKHYPYQTNGARLVIAYRRGSTHSYWSAIGELYHFHQMYATHKYVEQFSNGITIYSIYLRPLHPDVDINTKISKIAEQASLVYVLPRTSLTPLFLSHQLSFPEVTYAYVCWKFAYQFLNRYATEYSALAAAIGDDSTKQSMLAQLKTRLSKDTFTEGRVRDAVLQYPELIKILYQDFEKFHFSGSNSNNTQKYDVQHGSEILASIKKTVNNELDSQIFSAILSFNRHLLKTNFYKQTKTALSFRLDPGFLSTKEYVSTPYAVFFVVGSEFRGFHIRFRDISRGGIRIIRSGNSTQYDHNSSSLFDENYNLANTQQSKNKDIAEGGSKGTILLSADHQSKAEVAFHKYIDGLLDLLLPNHEIVDHFAKPEILFLGPDEGTADFMNWASSHAKDRGAHFWKAFTTGKSLSRGGIPHDLYGMTTRSIHQYVLGTLAKLGRNEADCTKFQTGGPDGDLGSNEIKISKDKTIGIVDGSGVLLDPQGLNRDEIGRLASKRQMARYFDKSKLSPQGFFVDVAENDVKLPNGDIVESGLIFRNNFHLNPLCNADIFVPCGGRPESVQLTNVDKMFTATGESRFPIIVEGANLFFTQKARLMIEEKGAIIFKDASANKGGVTSSSLEVLAALALNDEEFDRHMCVKDNVVPEFYENYIKDVHHTIESNARLEFECIWSEHESTKTPRSILSDLLSNKINSLNDSIQTSSLWTDQSLRRKIISAACPKVLLNLLGVDKIMERVPEPYVKAIFGSYLASRFVYKYGLNSNEFAFYTYMETLKQQ.

K596 is an active-site residue. R763 carries the ADP-ribosylarginine; by Legionella Lart1 modification.

This sequence belongs to the Glu/Leu/Phe/Val dehydrogenases family. Homodimer. In terms of processing, (Microbial infection) ADP-ribosylated at Arg-763 by the Legionella pneumophila effector Lart1, which inhibits the glutamate dehydrogenase activity. Amoeba are natural hosts of Legionella, and ADP-ribosylation by Lart1 may promote Legionella parasitism.

It localises to the cytoplasm. It carries out the reaction L-glutamate + NAD(+) + H2O = 2-oxoglutarate + NH4(+) + NADH + H(+). With respect to regulation, activity is stimulated by AMP. (Microbial infection) Inhibited by ADP-ribosylation. This Dictyostelium discoideum (Social amoeba) protein is Glutamate dehydrogenase 2 (glud2).